The chain runs to 187 residues: Flavin prenyltransferase UbiX (187 aa).

Residues 9–11 (GAS), Ser-34, and Arg-123 each bind FMN. The dimethylallyl phosphate site is built by Tyr-153 and Lys-169.

This sequence belongs to the UbiX/PAD1 family.

It catalyses the reaction dimethylallyl phosphate + FMNH2 = prenylated FMNH2 + phosphate. Flavin prenyltransferase that catalyzes the synthesis of the prenylated FMN cofactor (prenyl-FMN) for 4-hydroxy-3-polyprenylbenzoic acid decarboxylase UbiD. The prenyltransferase is metal-independent and links a dimethylallyl moiety from dimethylallyl monophosphate (DMAP) to the flavin N5 and C6 atoms of FMN. This Helicobacter pylori (strain J99 / ATCC 700824) (Campylobacter pylori J99) protein is Flavin prenyltransferase UbiX.